We begin with the raw amino-acid sequence, 255 residues long: Alkaline ceramidase (255 aa).

The Lumenal portion of the chain corresponds to 1 to 28 (MADGISSFWGPVTSTIECCEMNYAYSSY). Residues 29–49 (IAEFYNTISNVPGILLALIGL) form a helical membrane-spanning segment. At 50–60 (VNALRQRFEKR) the chain is on the cytoplasmic side. Residues 61-81 (FSILHISNMILAIGSMLYHAT) traverse the membrane as a helical segment. Residue His79 participates in Zn(2+) binding. The Lumenal portion of the chain corresponds to 82–91 (LQHVQQQSDE). A helical membrane pass occupies residues 92 to 112 (TPMVWEILLYMYILYSPDWHY). Over 113 to 118 (RSTMPT) the chain is Cytoplasmic. 2 helical membrane passes run 119–139 (FLFLYGAAFAIVHAYLRFGIG) and 140–160 (FKVHYVILCLLCIPRMYKYYI). The Cytoplasmic segment spans residues 161-169 (HTEDTAAKR). Residues 170–192 (IAKWYVATILVGSICWFCDRVFC) traverse the membrane as a helical segment. At 193-205 (KTISQWPVNPQGH) the chain is on the lumenal side. Positions 205 and 209 each coordinate Zn(2+). Residues 206-226 (ALWHVFMSFNSYCANTFLMFC) traverse the membrane as a helical segment. At 227 to 255 (RAQQRGWNPKVKYFLGVLPYVKIEKPKTQ) the chain is on the cytoplasmic side.

The protein belongs to the alkaline ceramidase family. Zn(2+) is required as a cofactor. As to expression, mostly expressed in roots, shoot meristems and pollen, and, to a lower extent, in mature leaves.

It localises to the endoplasmic reticulum membrane. Its subcellular location is the golgi apparatus membrane. In terms of biological role, hydrolyzes only phytoceramide into phytosphingosine and free fatty acid. Does not have reverse activity. Affects plant morphogenesis. Required for the formation of wax layer that ensure cuticle permeability. Implicated in abscisic acid (ABA)-mediated stomatal closure. Involved in both biotic and abiotic stresses. Promotes salt resistance and defenses responses toward pathogenic bacteria (e.g. P.syringae) and against the fungal toxin fumonisin B1 (FB1). The protein is Alkaline ceramidase of Arabidopsis thaliana (Mouse-ear cress).